The primary structure comprises 294 residues: Bifunctional protein FolD 1 (294 aa).

NADP(+) contacts are provided by residues 165 to 167 (GRS), Ser190, and Thr231.

This sequence belongs to the tetrahydrofolate dehydrogenase/cyclohydrolase family. In terms of assembly, homodimer.

It carries out the reaction (6R)-5,10-methylene-5,6,7,8-tetrahydrofolate + NADP(+) = (6R)-5,10-methenyltetrahydrofolate + NADPH. It catalyses the reaction (6R)-5,10-methenyltetrahydrofolate + H2O = (6R)-10-formyltetrahydrofolate + H(+). Its pathway is one-carbon metabolism; tetrahydrofolate interconversion. Catalyzes the oxidation of 5,10-methylenetetrahydrofolate to 5,10-methenyltetrahydrofolate and then the hydrolysis of 5,10-methenyltetrahydrofolate to 10-formyltetrahydrofolate. In Paenarthrobacter aurescens (strain TC1), this protein is Bifunctional protein FolD 1.